The chain runs to 119 residues: Small ribosomal subunit protein uS13 (119 aa).

Over residues 92 to 110 the composition is skewed to basic residues; it reads RKDTCKRSTKKNARTRKGP. The tract at residues 92 to 119 is disordered; the sequence is RKDTCKRSTKKNARTRKGPKKDNRWKER.

The protein belongs to the universal ribosomal protein uS13 family. Part of the 30S ribosomal subunit. Forms a loose heterodimer with protein S19. Forms two bridges to the 50S subunit in the 70S ribosome.

In terms of biological role, located at the top of the head of the 30S subunit, it contacts several helices of the 16S rRNA. In the 70S ribosome it contacts the 23S rRNA (bridge B1a) and protein L5 of the 50S subunit (bridge B1b), connecting the 2 subunits; these bridges are implicated in subunit movement. Contacts the tRNAs in the A and P-sites. The polypeptide is Small ribosomal subunit protein uS13 (Mycoplasma sp).